The chain runs to 132 residues: Holo-[acyl-carrier-protein] synthase (132 aa).

Positions 13 and 63 each coordinate Mg(2+).

This sequence belongs to the P-Pant transferase superfamily. AcpS family. Mg(2+) serves as cofactor.

The protein resides in the cytoplasm. It catalyses the reaction apo-[ACP] + CoA = holo-[ACP] + adenosine 3',5'-bisphosphate + H(+). Transfers the 4'-phosphopantetheine moiety from coenzyme A to a Ser of acyl-carrier-protein. This is Holo-[acyl-carrier-protein] synthase from Gloeobacter violaceus (strain ATCC 29082 / PCC 7421).